We begin with the raw amino-acid sequence, 116 residues long: Small ribosomal subunit protein uS13 (116 aa).

Positions 92-116 (RRGLPVRGQNTKNNARTRKGTKRNR) are disordered. Basic residues predominate over residues 106–116 (ARTRKGTKRNR).

It belongs to the universal ribosomal protein uS13 family. In terms of assembly, part of the 30S ribosomal subunit. Forms a loose heterodimer with protein S19. Forms two bridges to the 50S subunit in the 70S ribosome.

Its function is as follows. Located at the top of the head of the 30S subunit, it contacts several helices of the 16S rRNA. In the 70S ribosome it contacts the 23S rRNA (bridge B1a) and protein L5 of the 50S subunit (bridge B1b), connecting the 2 subunits; these bridges are implicated in subunit movement. Contacts the tRNAs in the A and P-sites. This Lactobacillus acidophilus (strain ATCC 700396 / NCK56 / N2 / NCFM) protein is Small ribosomal subunit protein uS13.